A 165-amino-acid polypeptide reads, in one-letter code: Phosphopantetheine adenylyltransferase (165 aa).

Substrate is bound at residue S10. Residues 10 to 11 and H18 each bind ATP; that span reads SF. Residues K42, T79, and R93 each coordinate substrate. Residues 94–96, E104, and 129–135 each bind ATP; these read GLR and VRPITAT.

It belongs to the bacterial CoaD family. Homohexamer. Requires Mg(2+) as cofactor.

Its subcellular location is the cytoplasm. The enzyme catalyses (R)-4'-phosphopantetheine + ATP + H(+) = 3'-dephospho-CoA + diphosphate. Its pathway is cofactor biosynthesis; coenzyme A biosynthesis; CoA from (R)-pantothenate: step 4/5. Its function is as follows. Reversibly transfers an adenylyl group from ATP to 4'-phosphopantetheine, yielding dephospho-CoA (dPCoA) and pyrophosphate. This is Phosphopantetheine adenylyltransferase from Rhodopseudomonas palustris (strain BisB5).